A 542-amino-acid polypeptide reads, in one-letter code: T-complex protein 1 subunit delta (542 aa).

Residues Met1–Ala16 show a composition bias toward low complexity. A disordered region spans residues Met1–Asp31. At Arg22 the chain carries Omega-N-methylarginine. Lys24 is subject to N6-acetyllysine. Position 39 is a phosphoserine (Ser39). Gly56 is a binding site for ADP. Gly56 is an ATP binding site. A Mg(2+)-binding site is contributed by Asp107. 7 residues coordinate ADP: Gly108, Thr109, Thr110, Ser111, Asn175, Ser176, and Lys177. ATP-binding residues include Gly108 and Thr109. Lys177 contacts ATP. Ser187 and Ser205 each carry phosphoserine. Lys291, Lys305, Lys322, and Lys329 each carry N6-acetyllysine. Position 428 (Gly428) interacts with ADP. A Phosphoserine modification is found at Ser447. Gln513 serves as a coordination point for ADP.

This sequence belongs to the TCP-1 chaperonin family. Component of the chaperonin-containing T-complex (TRiC), a hexadecamer composed of two identical back-to-back stacked rings enclosing a protein folding chamber. Each ring is made up of eight different subunits: TCP1/CCT1, CCT2, CCT3, CCT4, CCT5, CCT6A/CCT6, CCT7, CCT8. Interacts with PACRG. Interacts with DNAAF4. Interacts with DLEC1.

It is found in the cytoplasm. The protein localises to the melanosome. Its subcellular location is the cytoskeleton. The protein resides in the microtubule organizing center. It localises to the centrosome. It is found in the cilium basal body. It carries out the reaction ATP + H2O = ADP + phosphate + H(+). Its function is as follows. Component of the chaperonin-containing T-complex (TRiC), a molecular chaperone complex that assists the folding of actin, tubulin and other proteins upon ATP hydrolysis. The TRiC complex mediates the folding of WRAP53/TCAB1, thereby regulating telomere maintenance. As part of the TRiC complex may play a role in the assembly of BBSome, a complex involved in ciliogenesis regulating transports vesicles to the cilia. The protein is T-complex protein 1 subunit delta (CCT4) of Bos taurus (Bovine).